The following is a 449-amino-acid chain: Allantoinase (449 aa).

Residues histidine 61, histidine 63, lysine 148, histidine 184, histidine 240, and aspartate 313 each coordinate Zn(2+). Lysine 148 is subject to N6-carboxylysine.

This sequence belongs to the metallo-dependent hydrolases superfamily. Allantoinase family. In terms of assembly, homotetramer. Zn(2+) serves as cofactor. Carboxylation allows a single lysine to coordinate two zinc ions.

It carries out the reaction (S)-allantoin + H2O = allantoate + H(+). It functions in the pathway nitrogen metabolism; (S)-allantoin degradation; allantoate from (S)-allantoin: step 1/1. Catalyzes the conversion of allantoin (5-ureidohydantoin) to allantoic acid by hydrolytic cleavage of the five-member hydantoin ring. The sequence is that of Allantoinase from Desulfitobacterium hafniense (strain DSM 10664 / DCB-2).